The chain runs to 438 residues: Na(+)/H(+) antiporter NhaA 2 (438 aa).

The next 11 helical transmembrane spans lie at 21 to 41, 66 to 86, 102 to 122, 130 to 150, 160 to 180, 183 to 203, 206 to 226, 308 to 328, 341 to 361, 376 to 396, and 410 to 430; these read SGGIVLLGATVLALVLANSPW, LHHWINDGLMAVFFFLVGLEL, MLPIAAAFGGMLVPALIFHFI, KGWGIPMATDIAFALGVLALL, IFLTALAIVDDLGAVLVIALF, GELAVGKLLVALVLLLILIAG, LGVQSLNFYGLLGFCLWVVLL, WVIFGVIPIFALANAGLVLQL, LGVALGLLLGKPLGILFFSWI, WMDVFGVGILGGIGFTMSLFI, and AKLGIFIASMLAGAAGFTVLS.

The protein belongs to the NhaA Na(+)/H(+) (TC 2.A.33) antiporter family.

Its subcellular location is the cell inner membrane. It catalyses the reaction Na(+)(in) + 2 H(+)(out) = Na(+)(out) + 2 H(+)(in). In terms of biological role, na(+)/H(+) antiporter that extrudes sodium in exchange for external protons. This Syntrophotalea carbinolica (strain DSM 2380 / NBRC 103641 / GraBd1) (Pelobacter carbinolicus) protein is Na(+)/H(+) antiporter NhaA 2.